A 306-amino-acid chain; its full sequence is N-acetylmuramic acid 6-phosphate etherase (306 aa).

Residues 55 to 218 enclose the SIS domain; the sequence is AAATLLAGGR…STGAMIKIGK (164 aa). The active-site Proton donor is the glutamate 83. Glutamate 114 is an active-site residue.

This sequence belongs to the GCKR-like family. MurNAc-6-P etherase subfamily. In terms of assembly, homodimer.

The catalysed reaction is N-acetyl-D-muramate 6-phosphate + H2O = N-acetyl-D-glucosamine 6-phosphate + (R)-lactate. It functions in the pathway amino-sugar metabolism; 1,6-anhydro-N-acetylmuramate degradation. The protein operates within amino-sugar metabolism; N-acetylmuramate degradation. It participates in cell wall biogenesis; peptidoglycan recycling. Specifically catalyzes the cleavage of the D-lactyl ether substituent of MurNAc 6-phosphate, producing GlcNAc 6-phosphate and D-lactate. Together with AnmK, is also required for the utilization of anhydro-N-acetylmuramic acid (anhMurNAc) either imported from the medium or derived from its own cell wall murein, and thus plays a role in cell wall recycling. The polypeptide is N-acetylmuramic acid 6-phosphate etherase (Erwinia tasmaniensis (strain DSM 17950 / CFBP 7177 / CIP 109463 / NCPPB 4357 / Et1/99)).